Reading from the N-terminus, the 382-residue chain is Mannitol-1-phosphate 5-dehydrogenase (382 aa).

3 to 14 (ALHFGAGNIGRG) serves as a coordination point for NAD(+).

It belongs to the mannitol dehydrogenase family.

It carries out the reaction D-mannitol 1-phosphate + NAD(+) = beta-D-fructose 6-phosphate + NADH + H(+). The chain is Mannitol-1-phosphate 5-dehydrogenase from Salmonella paratyphi A (strain ATCC 9150 / SARB42).